We begin with the raw amino-acid sequence, 209 residues long: Probable GTP-binding protein EngB (209 aa).

One can recognise an EngB-type G domain in the interval 22 to 198 (TPLEIAFVGR…NRTVGSWFDA (177 aa)). Positions 37 and 59 each coordinate Mg(2+).

The protein belongs to the TRAFAC class TrmE-Era-EngA-EngB-Septin-like GTPase superfamily. EngB GTPase family. Mg(2+) is required as a cofactor.

Necessary for normal cell division and for the maintenance of normal septation. The protein is Probable GTP-binding protein EngB of Neisseria gonorrhoeae.